Consider the following 754-residue polypeptide: Ribosomal RNA large subunit methyltransferase K/L (754 aa).

Positions threonine 46–leucine 157 constitute a THUMP domain.

This sequence belongs to the methyltransferase superfamily. RlmKL family.

It is found in the cytoplasm. It catalyses the reaction guanosine(2445) in 23S rRNA + S-adenosyl-L-methionine = N(2)-methylguanosine(2445) in 23S rRNA + S-adenosyl-L-homocysteine + H(+). It carries out the reaction guanosine(2069) in 23S rRNA + S-adenosyl-L-methionine = N(2)-methylguanosine(2069) in 23S rRNA + S-adenosyl-L-homocysteine + H(+). Its function is as follows. Specifically methylates the guanine in position 2445 (m2G2445) and the guanine in position 2069 (m7G2069) of 23S rRNA. The protein is Ribosomal RNA large subunit methyltransferase K/L of Pseudomonas fluorescens (strain ATCC BAA-477 / NRRL B-23932 / Pf-5).